Consider the following 221-residue polypeptide: Phosphoribosylformylglycinamidine synthase subunit PurQ (221 aa).

Residues 8 to 221 (NVGIIRFPGT…GLKFFKSFLD (214 aa)) form the Glutamine amidotransferase type-1 domain. Residue cysteine 91 is the Nucleophile of the active site. Active-site residues include histidine 198 and glutamate 200.

In terms of assembly, part of the FGAM synthase complex composed of 1 PurL, 1 PurQ and 2 PurS subunits.

It localises to the cytoplasm. It carries out the reaction N(2)-formyl-N(1)-(5-phospho-beta-D-ribosyl)glycinamide + L-glutamine + ATP + H2O = 2-formamido-N(1)-(5-O-phospho-beta-D-ribosyl)acetamidine + L-glutamate + ADP + phosphate + H(+). The enzyme catalyses L-glutamine + H2O = L-glutamate + NH4(+). It participates in purine metabolism; IMP biosynthesis via de novo pathway; 5-amino-1-(5-phospho-D-ribosyl)imidazole from N(2)-formyl-N(1)-(5-phospho-D-ribosyl)glycinamide: step 1/2. In terms of biological role, part of the phosphoribosylformylglycinamidine synthase complex involved in the purines biosynthetic pathway. Catalyzes the ATP-dependent conversion of formylglycinamide ribonucleotide (FGAR) and glutamine to yield formylglycinamidine ribonucleotide (FGAM) and glutamate. The FGAM synthase complex is composed of three subunits. PurQ produces an ammonia molecule by converting glutamine to glutamate. PurL transfers the ammonia molecule to FGAR to form FGAM in an ATP-dependent manner. PurS interacts with PurQ and PurL and is thought to assist in the transfer of the ammonia molecule from PurQ to PurL. This is Phosphoribosylformylglycinamidine synthase subunit PurQ from Methanosphaera stadtmanae (strain ATCC 43021 / DSM 3091 / JCM 11832 / MCB-3).